A 378-amino-acid chain; its full sequence is 1-acyl-sn-glycerol-3-phosphate acyltransferase delta (378 aa).

The chain crosses the membrane as a helical span at residues 11–31 (FLCHLVFCYVFIASGLIVNAI). Positions 96 to 101 (HKFEID) match the HXXXXD motif motif. Helical transmembrane passes span 125-145 (ELAYVPIIGWMWYFVEMIFCT), 311-331 (WLFWASLLLYPFFQFLVSMVS), and 338-358 (LASLVLIFCMASMGVRWMIGV).

Belongs to the 1-acyl-sn-glycerol-3-phosphate acyltransferase family.

The protein resides in the endoplasmic reticulum membrane. The catalysed reaction is a 1-acyl-sn-glycero-3-phosphate + an acyl-CoA = a 1,2-diacyl-sn-glycero-3-phosphate + CoA. The enzyme catalyses (4Z,7Z,10Z,13Z,16Z,19Z)-docosahexaenoyl-CoA + 1-hexadecanoyl-sn-glycero-3-phosphate = 1-hexadecanoyl-2-(4Z,7Z,10Z,13Z,16Z,19Z-docosahexaenoyl)-sn-glycero-3-phosphate + CoA. It catalyses the reaction 1-octadecanoyl-sn-glycero-3-phosphate + (9Z,12Z)-octadecadienoyl-CoA = 1-octadecanoyl-2-(9Z,12Z-octadecadienoyl)-sn-glycero-3-phosphate + CoA. It carries out the reaction 1-octadecanoyl-sn-glycero-3-phosphate + (4Z,7Z,10Z,13Z,16Z,19Z)-docosahexaenoyl-CoA = 1-octadecanoyl-2-(4Z,7Z,10Z,13Z,16Z,19Z-docosahexaenoyl)-sn-glycero-3-phosphate + CoA. The catalysed reaction is (4Z,7Z,10Z,13Z,16Z,19Z)-docosahexaenoyl-CoA + 1-(9Z-octadecenoyl)-sn-glycero-3-phosphate = 1-(9Z-octadecenoyl)-2-(4Z,7Z,10Z,13Z,16Z,19Z-docosahexaenoyl)-sn-glycero-3-phosphate + CoA. Its pathway is phospholipid metabolism; CDP-diacylglycerol biosynthesis; CDP-diacylglycerol from sn-glycerol 3-phosphate: step 2/3. In terms of biological role, converts 1-acyl-sn-glycerol-3-phosphate (lysophosphatidic acid or LPA) into 1,2-diacyl-sn-glycerol-3-phosphate (phosphatidic acid or PA) by incorporating an acyl moiety at the sn-2 position of the glycerol backbone. Exhibits high acyl-CoA specificity for polyunsaturated fatty acyl-CoA, especially docosahexaenoyl-CoA (22:6-CoA, DHA-CoA). The protein is 1-acyl-sn-glycerol-3-phosphate acyltransferase delta (Agpat4) of Rattus norvegicus (Rat).